We begin with the raw amino-acid sequence, 394 residues long: MADEIMENVELTTSEDVNAVSSFEEMNLKEDLLRGIYAYGYETPSAVQSRAIIQICKGRDVIAQAQSGTGKTATFSIGILQSIDLSVRDTQALILSPTRELAVQIQNVVLALGDHMNVQCHACIGGTSVGNDIKKLDYGQHVVSGTPGRVTDMIRRRNLRTRNVKMLILDEADELLNQGFKEQIYDIYRYLPPGTQVVVVSATLPQDVLEMTNKFTTNPVRILVKRDELTLEGLKQYFIAVEKEEWKFDTLCDLYDTLTITQAVIFCNSRRKVDWLTEKMREANFTVTSMHGEMPQKERDAIMQDFRQGNSRVLICTDIWARGIDVQQVSLVINYDLPANRENYIHRIGRSGRFGRKGVAINFVTNEDVRILRDIEQYYSTVIDEMPMNIGDMV.

A Q motif motif is present at residues Ser-21 to Ser-49. The Helicase ATP-binding domain occupies Ile-52–Ile-222. Ala-65 to Thr-72 provides a ligand contact to ATP. A Phosphoserine modification is found at Ser-67. The DEAD box motif lies at Asp-170–Asp-173. The Helicase C-terminal domain maps to Gly-233–Val-394.

It belongs to the DEAD box helicase family. DDX48/FAL1 subfamily.

The protein localises to the nucleus. It localises to the nucleolus. The enzyme catalyses ATP + H2O = ADP + phosphate + H(+). Functionally, ATP-dependent RNA helicase involved in 40S ribosomal subunit biogenesis. Required for the processing and cleavage of 35S pre-rRNA at sites A0, A1, and A2, leading to mature 18S rRNA. The protein is ATP-dependent RNA helicase fal1 (tif412) of Schizosaccharomyces pombe (strain 972 / ATCC 24843) (Fission yeast).